Reading from the N-terminus, the 266-residue chain is Protein-ADP-ribose hydrolase (266 aa).

The Macro domain occupies 74-265 (TDLKDLKPIK…LYKEAFNRDA (192 aa)). Asp93, Ile94, and Asn107 together coordinate ADP-D-ribose. Zn(2+) is bound by residues Cys113, His118, and Cys120. Residues Cys120, Ile121, Asp122, Ser212, Thr213, Gly214, and Phe216 each coordinate ADP-D-ribose.

It belongs to the MacroD-type family. Zn-Macro subfamily. It depends on Zn(2+) as a cofactor.

It carries out the reaction 4-O-(ADP-D-ribosyl)-L-aspartyl-[protein] + H2O = L-aspartyl-[protein] + ADP-D-ribose + H(+). Its function is as follows. ADP-ribosylhydrolase that specifically reverses the SirTM-mediated mono-ADP-ribosylation at an asparatate residue of GcvH-L, by releasing ADP-ribose from the target protein. May play a role in the regulation of the response to host-induced oxidative stress. The chain is Protein-ADP-ribose hydrolase from Staphylococcus aureus (strain COL).